We begin with the raw amino-acid sequence, 520 residues long: Ribonuclease Y (520 aa).

A helical transmembrane segment spans residues 4–24 (TVWILISILLATVGAVVGFFV). Positions 86-116 (KQENRLMQKEENLDRKDETLDKREQQLEKKE) are disordered. The 64-residue stretch at 210–273 (TVSVVNLPND…ETARIALDKL (64 aa)) folds into the KH domain. An HD domain is found at 336-429 (VLKHSMEVAY…VAAADALSAA (94 aa)).

The protein belongs to the RNase Y family.

Its subcellular location is the cell membrane. Its function is as follows. Endoribonuclease that initiates mRNA decay. The polypeptide is Ribonuclease Y (Bacillus cereus (strain ATCC 10987 / NRS 248)).